The following is a 212-amino-acid chain: Ras-related protein Rab-2A (212 aa).

Position 2 is an N-acetylalanine (Ala-2). The required for interaction with PRKCI stretch occupies residues 2–19 (AYAYLFKYIIIGDTGVGK). 7 residues coordinate GTP: Gly-16, Val-17, Gly-18, Lys-19, Ser-20, Cys-21, and Thr-38. Ser-20 lines the Mg(2+) pocket. Positions 37-42 (LTIGVE) match the Switch 1 motif. Mg(2+) is bound by residues Thr-38 and Asp-61. The Switch 2 motif lies at 63–72 (AGQESFRSIT). The GTP site is built by Gly-64, Asn-119, Lys-120, Asp-122, Ala-150, and Lys-151. S-geranylgeranyl cysteine attachment occurs at residues Cys-211 and Cys-212.

The protein belongs to the small GTPase superfamily. Rab family. In terms of assembly, interacts with PRKCI. Interacts with TRIP11. Interacts (in GTP-bound form) with GARIN1B. Interacts (GTP-bound) with HOPS complex component VPS39; interaction contributes to obtaining a functional HOPS complex that promotes autophagosome-lysosome membrane fusion driven by STX17-SNAP29-VAMP8. May interact with VPS41. Mg(2+) is required as a cofactor. Prenylated. Prenylation is required for association with cellular membranes.

The protein resides in the endoplasmic reticulum-Golgi intermediate compartment membrane. It localises to the melanosome. It is found in the endoplasmic reticulum membrane. Its subcellular location is the golgi apparatus membrane. The protein localises to the cytoplasmic vesicle. The protein resides in the secretory vesicle. It localises to the acrosome. It is found in the autophagosome membrane. It catalyses the reaction GTP + H2O = GDP + phosphate + H(+). Regulated by guanine nucleotide exchange factors (GEFs) which promote the exchange of bound GDP for free GTP, GTPase activating proteins (GAPs) which increase the GTP hydrolysis activity, and GDP dissociation inhibitors (GDIs) which inhibit the dissociation of the nucleotide from the GTPase. Its function is as follows. The small GTPases Rab are key regulators of intracellular membrane trafficking, from the formation of transport vesicles to their fusion with membranes. Rabs cycle between active GTP-bound and inactive GDP-bound states. In their active state, drive transport of vesicular carriers from donor organelles to acceptor organelles to regulate the membrane traffic that maintains organelle identity and morphology. RAB2A regulates autophagy by promoting autophagosome-lysosome fusion via recruitment of the HOPS endosomal tethering complex; this process involves autophagosomal RAB2A and lysosomal RAB39A recruitment of HOPS subcomplexes VPS39-VPS11 and VPS41-VPS16-VPS18-VPS33A, respectively, which assemble into a functional complex to mediate membrane tethering and SNAREs-driven membrane fusion. Required for protein transport from the endoplasmic reticulum to the Golgi complex. Regulates the compacted morphology of the Golgi. Together with RAB2B, redundantly required for efficient autophagic flux. The polypeptide is Ras-related protein Rab-2A (RAB2A) (Canis lupus familiaris (Dog)).